The chain runs to 411 residues: 6-hydroxytryprostatin B O-methyltransferase (411 aa).

An S-adenosyl-L-methionine-binding site is contributed by Asp270. His313 functions as the Proton acceptor in the catalytic mechanism.

The protein belongs to the class I-like SAM-binding methyltransferase superfamily. Cation-independent O-methyltransferase family. In terms of assembly, homodimer.

It catalyses the reaction 6-hydroxytryprostatin B + S-adenosyl-L-methionine = tryprostatin A + S-adenosyl-L-homocysteine + H(+). It participates in alkaloid biosynthesis. In terms of biological role, 6-hydroxytryprostatin B O-methyltransferase; part of the gene cluster that mediates the biosynthesis of fumitremorgins, indole alkaloids that carry not only intriguing chemical structures, but also interesting biological and pharmacological activities. The biosynthesis of fumitremorgin-type alkaloids begins by condensation of the two amino acids L-tryptophan and L-proline to brevianamide F, catalyzed by the non-ribosomal peptide synthetase ftmPS/ftmA. Brevianamide F is then prenylated by the prenyltransferase ftmPT1/ftmB in the presence of dimethylallyl diphosphate, resulting in the formation of tryprostatin B. The three cytochrome P450 monooxygenases, ftmP450-1/ftmC, ftmP450-2/ftmE and ftmP450-3/FtmG, are responsible for the conversion of tryprostatin B to 6-hydroxytryprostatin B, tryprostatin A to fumitremorgin C and fumitremorgin C to 12,13-dihydroxyfumitremorgin C, respectively. The putative methyltransferase ftmMT/ftmD is expected for the conversion of 6-hydroxytryprostatin B to tryprostatin A. FtmPT2/FtmH catalyzes the prenylation of 12,13-dihydroxyfumitre-morgin C in the presence of dimethylallyl diphosphate, resulting in the formation of fumitremorgin B. Fumitremorgin B is further converted to verruculogen by ftmOx1/ftmF via the insertion of an endoperoxide bond between the two prenyl moieties. Finally, verruculogen is further converted to fumitremorgin A by the verruculogen prenyltransferase ftmPT3. The protein is 6-hydroxytryprostatin B O-methyltransferase of Neosartorya fischeri (strain ATCC 1020 / DSM 3700 / CBS 544.65 / FGSC A1164 / JCM 1740 / NRRL 181 / WB 181) (Aspergillus fischerianus).